A 223-amino-acid polypeptide reads, in one-letter code: Ribonuclease 3 (223 aa).

The region spanning 3–125 is the RNase III domain; it reads LERLQKKLGY…IIAAIYLDAG (123 aa). E38 contributes to the Mg(2+) binding site. D42 is an active-site residue. Mg(2+)-binding residues include D111 and E114. The active site involves E114. The 71-residue stretch at 152 to 222 folds into the DRBM domain; that stretch reads DPKTRLQEFL…AEQVLAKLTT (71 aa).

This sequence belongs to the ribonuclease III family. In terms of assembly, homodimer. Requires Mg(2+) as cofactor.

The protein resides in the cytoplasm. It carries out the reaction Endonucleolytic cleavage to 5'-phosphomonoester.. Digests double-stranded RNA. Involved in the processing of primary rRNA transcript to yield the immediate precursors to the large and small rRNAs (23S and 16S). Processes some mRNAs, and tRNAs when they are encoded in the rRNA operon. Processes pre-crRNA and tracrRNA of type II CRISPR loci if present in the organism. In Actinobacillus pleuropneumoniae serotype 3 (strain JL03), this protein is Ribonuclease 3.